The chain runs to 401 residues: Phosphoglycerate kinase (401 aa).

Residues 21 to 23 (DLN), R37, 60 to 63 (HLGR), R119, and R152 each bind substrate. Residues K203, E325, and 351–354 (GGDT) each bind ATP.

It belongs to the phosphoglycerate kinase family. Monomer.

The protein localises to the cytoplasm. It carries out the reaction (2R)-3-phosphoglycerate + ATP = (2R)-3-phospho-glyceroyl phosphate + ADP. It participates in carbohydrate degradation; glycolysis; pyruvate from D-glyceraldehyde 3-phosphate: step 2/5. This is Phosphoglycerate kinase from Acidithiobacillus ferrooxidans (strain ATCC 23270 / DSM 14882 / CIP 104768 / NCIMB 8455) (Ferrobacillus ferrooxidans (strain ATCC 23270)).